The following is a 720-amino-acid chain: TAL effector protein Rip19 (720 aa).

Disordered regions lie at residues 13–85 (SVSL…PSLV) and 175–205 (QAFASPPRAPRSARARRARTGGDAWPAPTFL). Positions 67–85 (PRRPLPVAPASAPPAPSLV) are enriched in pro residues. Positions 185 to 191 (RSARARR) match the Nuclear localization signal 1 motif. One copy of the Cryptic repeat -1 repeat lies at 286 to 320 (LTRAHIVDIARQRSGDLALQALLPVATALTAAPLR). A Cryptic repeat 0 repeat occupies 321–354 (LSASQIATVAQYGERPAIQALYRLRRKLTRAPLH). The Core repeat 1 repeat unit spans residues 355 to 389 (LTPQQVVAIASHDGGKPALEAVWAKLPVLRGVPYA). Residues 390 to 423 (LSTAQVVAIACISGQQALEAIEAHMPTLRQAPHS) form a Cryptic repeat +1 repeat. The stretch at 424–457 (LSPERVAAIACIGGRSAVEAVRQGLPVKAIRRIR) is one Cryptic repeat +2 repeat. Short sequence motifs (nuclear localization signal) lie at residues 455 to 458 (RIRR), 583 to 586 (HRKR), and 620 to 623 (RRKR). The tract at residues 571–611 (SPGMAGQSACSPHRKRPAETAIAPRSIRRRPNNAGQPSEPW) is disordered.

This sequence belongs to the transcription activator-like effector (TALE) family. RipTAL/RTL subfamily.

The protein localises to the secreted. It is found in the host nucleus. In terms of biological role, does not activate plant gene transcription, because it has too few core repeats. The sequence is that of TAL effector protein Rip19 from Ralstonia solanacearum (Pseudomonas solanacearum).